Reading from the N-terminus, the 336-residue chain is 3-isopropylmalate dehydrogenase (336 aa).

4 residues coordinate substrate: Arg87, Arg97, Arg121, and Asp211. The Mg(2+) site is built by Asp211, Asp235, and Asp239. Residue 271 to 283 (GSAPDIAGQGIAD) coordinates NAD(+).

It belongs to the isocitrate and isopropylmalate dehydrogenases family. LeuB type 2 subfamily. Homodimer. The cofactor is Mg(2+). It depends on Mn(2+) as a cofactor.

The protein localises to the cytoplasm. The catalysed reaction is (2R,3S)-3-isopropylmalate + NAD(+) = 4-methyl-2-oxopentanoate + CO2 + NADH. It functions in the pathway amino-acid biosynthesis; L-leucine biosynthesis; L-leucine from 3-methyl-2-oxobutanoate: step 3/4. Its function is as follows. Catalyzes the oxidation of 3-carboxy-2-hydroxy-4-methylpentanoate (3-isopropylmalate) to 3-carboxy-4-methyl-2-oxopentanoate. The product decarboxylates to 4-methyl-2 oxopentanoate. The sequence is that of 3-isopropylmalate dehydrogenase from Rhodococcus jostii (strain RHA1).